Consider the following 460-residue polypeptide: Cysteine proteinase 7 (460 aa).

The N-terminal stretch at 1–17 (MKVLSALCVLLVSVATA) is a signal peptide. Residues 18 to 111 (KQQLSEVEYR…TESDKIFDAS (94 aa)) constitute a propeptide, activation peptide. 2 disulfides stabilise this stretch: cysteine 131–cysteine 176 and cysteine 167–cysteine 210. Cysteine 134 is a catalytic residue. N-linked (GlcNAc...) asparagine glycans are attached at residues asparagine 226 and asparagine 252. Cysteines 268 and 445 form a disulfide. Residue histidine 275 is part of the active site. The interval 285 to 409 (GSGSSGSHGG…GSSSGSNSNG (125 aa)) is disordered. Positions 294 to 359 (GSQSQSAGSD…QSGSQSGNSG (66 aa)) are enriched in low complexity. Positions 367-385 (AGSGSGSGSGSGSGSGSGS) are enriched in gly residues. The segment covering 386-409 (VSGSASGSASGSASGSSSGSNSNG) has biased composition (low complexity). The active site involves asparagine 423.

Belongs to the peptidase C1 family. Glycosylated; contains GlcNAc-alpha-1-P-Ser residues. Also N-glycosylated.

It localises to the lysosome. The chain is Cysteine proteinase 7 (cprG) from Dictyostelium discoideum (Social amoeba).